A 557-amino-acid chain; its full sequence is Potassium-transporting ATPase potassium-binding subunit (557 aa).

The next 12 membrane-spanning stretches (helical) occupy residues Gly-5–Ser-25, Leu-63–Gly-83, Gly-132–Ile-152, Leu-170–Ile-190, Phe-253–Val-273, Leu-283–Val-303, Val-329–Ala-349, Ala-356–Val-376, Gly-379–Gly-399, Leu-416–Met-436, Leu-484–Ala-504, and Leu-526–Ala-546.

It belongs to the KdpA family. In terms of assembly, the system is composed of three essential subunits: KdpA, KdpB and KdpC.

The protein localises to the cell inner membrane. Functionally, part of the high-affinity ATP-driven potassium transport (or Kdp) system, which catalyzes the hydrolysis of ATP coupled with the electrogenic transport of potassium into the cytoplasm. This subunit binds the periplasmic potassium ions and delivers the ions to the membrane domain of KdpB through an intramembrane tunnel. This is Potassium-transporting ATPase potassium-binding subunit from Escherichia coli (strain SMS-3-5 / SECEC).